Consider the following 91-residue polypeptide: Alpha-defensin-related sequence 2 (91 aa).

The signal sequence occupies residues 1 to 19 (MKKLVLLFALVLLAFQVQA). Positions 20 to 58 (DSIQNTDEETKTEEQPGEKDQAVSVSFGDPQGSALQDAA) are excised as a propeptide. The disordered stretch occupies residues 22 to 48 (IQNTDEETKTEEQPGEKDQAVSVSFGD). The segment covering 27 to 40 (EETKTEEQPGEKDQ) has biased composition (basic and acidic residues). 7 consecutive repeat copies span residues 65-67 (CPQ), 68-70 (CPR), 71-73 (CPS), 74-76 (CPS), 77-79 (CPR), 80-82 (CPR), and 83-85 (CPR). The tract at residues 65–85 (CPQCPRCPSCPSCPRCPRCPR) is 7 X 3 AA tandem repeats of C-P-X.

Belongs to the alpha-defensin family. As to expression, small bowel, spleen, colon, kidney, liver, stomach and femur marrow.

It is found in the secreted. Functionally, apparent precursor of a secreted, cationic, proline- and cysteine-rich peptide that contains Cys-Pro-Xaa repeats. Unlike cryptdin, the proposed mature peptide region lacks the structural motif characteristic of defensins. It may have microbicidal activities. The protein is Alpha-defensin-related sequence 2 (Defa-rs2) of Mus musculus (Mouse).